The primary structure comprises 304 residues: Acetylglutamate kinase (304 aa).

Substrate contacts are provided by residues 69 to 70, arginine 91, and asparagine 202; that span reads GG.

The protein belongs to the acetylglutamate kinase family. ArgB subfamily.

The protein localises to the cytoplasm. The catalysed reaction is N-acetyl-L-glutamate + ATP = N-acetyl-L-glutamyl 5-phosphate + ADP. It functions in the pathway amino-acid biosynthesis; L-arginine biosynthesis; N(2)-acetyl-L-ornithine from L-glutamate: step 2/4. In terms of biological role, catalyzes the ATP-dependent phosphorylation of N-acetyl-L-glutamate. The polypeptide is Acetylglutamate kinase (Caulobacter vibrioides (strain ATCC 19089 / CIP 103742 / CB 15) (Caulobacter crescentus)).